Reading from the N-terminus, the 218-residue chain is MAEKDEVNTLRARFRGFYPVVIDVETAGFNSGTDALLEIAAITLQMDHHGWLKTHKTLHFNIEPFPGSILQPEALIFNGIDPDNPLRYAVTEREALYELFTIVHQGIKDDDCHRAILVAHNAAFDHSFLMAAANRTKIKHNPFHPFATFDTAALSGLVLGQTVLLKACLTAGIPFNTSEAHSALYDAERTAELFCELVNRWKRLGGWTKVTTSSIHSV.

The Exonuclease domain occupies Val20–Phe194. 4 residues coordinate Mg(2+): Asp23, Glu25, His181, and Asp186. His181 (proton donor/acceptor) is an active-site residue.

It belongs to the RNase T family. In terms of assembly, homodimer. It depends on Mg(2+) as a cofactor.

Its function is as follows. Trims short 3' overhangs of a variety of RNA species, leaving a one or two nucleotide 3' overhang. Responsible for the end-turnover of tRNA: specifically removes the terminal AMP residue from uncharged tRNA (tRNA-C-C-A). Also appears to be involved in tRNA biosynthesis. This is Ribonuclease T from Baumannia cicadellinicola subsp. Homalodisca coagulata.